A 229-amino-acid polypeptide reads, in one-letter code: Dephospho-CoA kinase (229 aa).

In terms of domain architecture, DPCK spans 3–203 (TVGLTGGIGS…ARRDAKATAK (201 aa)). Position 11–16 (11–16 (GSGKSA)) interacts with ATP. A disordered region spans residues 203–229 (KATAKAETVASGTDTAASGTDTAAPAG).

This sequence belongs to the CoaE family.

The protein localises to the cytoplasm. It carries out the reaction 3'-dephospho-CoA + ATP = ADP + CoA + H(+). It participates in cofactor biosynthesis; coenzyme A biosynthesis; CoA from (R)-pantothenate: step 5/5. Catalyzes the phosphorylation of the 3'-hydroxyl group of dephosphocoenzyme A to form coenzyme A. The chain is Dephospho-CoA kinase from Frankia casuarinae (strain DSM 45818 / CECT 9043 / HFP020203 / CcI3).